The sequence spans 425 residues: Tyrosine--tRNA ligase (425 aa).

Y33 lines the L-tyrosine pocket. Positions 38–47 (PTADSLHLGN) match the 'HIGH' region motif. Y170 and Q174 together coordinate L-tyrosine. Residues 230-234 (KFGKS) carry the 'KMSKS' region motif. K233 is an ATP binding site. An S4 RNA-binding domain is found at 356-422 (KKLIDLLVET…GKKNKMIIRL (67 aa)).

It belongs to the class-I aminoacyl-tRNA synthetase family. TyrS type 1 subfamily. As to quaternary structure, homodimer.

It localises to the cytoplasm. The enzyme catalyses tRNA(Tyr) + L-tyrosine + ATP = L-tyrosyl-tRNA(Tyr) + AMP + diphosphate + H(+). Functionally, catalyzes the attachment of tyrosine to tRNA(Tyr) in a two-step reaction: tyrosine is first activated by ATP to form Tyr-AMP and then transferred to the acceptor end of tRNA(Tyr). The protein is Tyrosine--tRNA ligase of Protochlamydia amoebophila (strain UWE25).